We begin with the raw amino-acid sequence, 1340 residues long: DNA-directed RNA polymerase subunit beta (1340 aa).

The protein belongs to the RNA polymerase beta chain family. The RNAP catalytic core consists of 2 alpha, 1 beta, 1 beta' and 1 omega subunit. When a sigma factor is associated with the core the holoenzyme is formed, which can initiate transcription.

It carries out the reaction RNA(n) + a ribonucleoside 5'-triphosphate = RNA(n+1) + diphosphate. Its function is as follows. DNA-dependent RNA polymerase catalyzes the transcription of DNA into RNA using the four ribonucleoside triphosphates as substrates. The chain is DNA-directed RNA polymerase subunit beta from Baumannia cicadellinicola subsp. Homalodisca coagulata.